The primary structure comprises 250 residues: Cysteine proteinase inhibitor 12 (250 aa).

Residues 1 to 32 (MRVAATTRPASSSAAAPLPLFLLLAVAAAAAA) form the signal peptide. 2 Cystatin domains span residues 49 to 137 (GGAH…RNTG) and 156 to 202 (PGWR…AEVV). The Secondary area of contact signature appears at 93 to 97 (QVVAG).

The protein belongs to the cystatin family. Phytocystatin subfamily.

The protein resides in the secreted. Its function is as follows. Specific inhibitor of cysteine proteinases. Probably involved in the regulation of endogenous processes and in defense against pests and pathogens. This chain is Cysteine proteinase inhibitor 12, found in Oryza sativa subsp. japonica (Rice).